We begin with the raw amino-acid sequence, 158 residues long: 6,7-dimethyl-8-ribityllumazine synthase (158 aa).

Residues Phe22, 56 to 58 (ALE), and 80 to 82 (VVI) each bind 5-amino-6-(D-ribitylamino)uracil. 85–86 (ET) lines the (2S)-2-hydroxy-3-oxobutyl phosphate pocket. Residue His88 is the Proton donor of the active site. Asn113 serves as a coordination point for 5-amino-6-(D-ribitylamino)uracil. (2S)-2-hydroxy-3-oxobutyl phosphate is bound at residue Arg127.

Belongs to the DMRL synthase family.

The enzyme catalyses (2S)-2-hydroxy-3-oxobutyl phosphate + 5-amino-6-(D-ribitylamino)uracil = 6,7-dimethyl-8-(1-D-ribityl)lumazine + phosphate + 2 H2O + H(+). It participates in cofactor biosynthesis; riboflavin biosynthesis; riboflavin from 2-hydroxy-3-oxobutyl phosphate and 5-amino-6-(D-ribitylamino)uracil: step 1/2. Functionally, catalyzes the formation of 6,7-dimethyl-8-ribityllumazine by condensation of 5-amino-6-(D-ribitylamino)uracil with 3,4-dihydroxy-2-butanone 4-phosphate. This is the penultimate step in the biosynthesis of riboflavin. The sequence is that of 6,7-dimethyl-8-ribityllumazine synthase from Neisseria meningitidis serogroup C (strain 053442).